The following is a 191-amino-acid chain: Holliday junction branch migration complex subunit RuvA (191 aa).

Positions 1-63 (MIRYLRGLVL…EEGLSLYGFP (63 aa)) are domain I. Positions 64 to 136 (DEENLALFEL…LKGKVPPHLL (73 aa)) are domain II. The flexible linker stretch occupies residues 136 to 140 (LAGEK). Residues 141–191 (VESEAAEEAVMALAALGFKEAQARAVVLDLLAQNPKARAQDLIKEALKRLR) are domain III.

It belongs to the RuvA family. In terms of assembly, homotetramer. Forms an RuvA(8)-RuvB(12)-Holliday junction (HJ) complex. HJ DNA is sandwiched between 2 RuvA tetramers; dsDNA enters through RuvA and exits via RuvB. An RuvB hexamer assembles on each DNA strand where it exits the tetramer. Each RuvB hexamer is contacted by two RuvA subunits (via domain III) on 2 adjacent RuvB subunits; this complex drives branch migration. In the full resolvosome a probable DNA-RuvA(4)-RuvB(12)-RuvC(2) complex forms which resolves the HJ.

It is found in the cytoplasm. Functionally, the RuvA-RuvB-RuvC complex processes Holliday junction (HJ) DNA during genetic recombination and DNA repair, while the RuvA-RuvB complex plays an important role in the rescue of blocked DNA replication forks via replication fork reversal (RFR). RuvA specifically binds to HJ cruciform DNA, conferring on it an open structure. The RuvB hexamer acts as an ATP-dependent pump, pulling dsDNA into and through the RuvAB complex. HJ branch migration allows RuvC to scan DNA until it finds its consensus sequence, where it cleaves and resolves the cruciform DNA. The chain is Holliday junction branch migration complex subunit RuvA from Thermus thermophilus (strain ATCC BAA-163 / DSM 7039 / HB27).